The sequence spans 517 residues: Cytochrome P450 monooxygenase penP (517 aa).

The chain crosses the membrane as a helical span at residues 17–37; the sequence is GEATVIWILVALVLVAYLILP. Cys456 lines the heme pocket. Asn501 is a glycosylation site (N-linked (GlcNAc...) asparagine).

The protein belongs to the cytochrome P450 family. The cofactor is heme.

The protein localises to the membrane. The protein operates within secondary metabolite biosynthesis. In terms of biological role, cytochrome P450 monooxygenase; part of the gene cluster that mediates the biosynthesis of the indole diterpenes penitrems. The geranylgeranyl diphosphate (GGPP) synthase penG catalyzes the first step in penitrem biosynthesis via conversion of farnesyl pyrophosphate and isopentyl pyrophosphate into geranylgeranyl pyrophosphate (GGPP). Condensation of indole-3-glycerol phosphate with GGPP by the prenyl transferase penC then forms 3-geranylgeranylindole (3-GGI). Epoxidation by the FAD-dependent monooxygenase penM leads to a epoxidized-GGI that is substrate of the terpene cyclase penB for cyclization to yield paspaline. Paspaline is subsequently converted to 13-desoxypaxilline by the cytochrome P450 monooxygenase penP, the latter being then converted to paxilline by the cytochrome P450 monooxygenase penQ. Paxilline is converted to beta-paxitriol via C-10 ketoreduction by the short-chain dehydrogenase PC-15 which can be monoprenylated at the C-20 by the indole diterpene prenyltransferase penD. A two-step elimination (acetylation and elimination) process performed by the O-acetyltransferase PC-16 and the P.simplicissimum ptmI-ortholog not yet identified in P.crustosum, leads to the production of the prenylated form of penijanthine. The FAD-linked oxidoreductase ptmO then converts the prenylated form of penijanthine into PC-M5 which is in turn transformed into PC-M4 by the aromatic dimethylallyltransferase PC-22. A series of oxidation steps involving 4 cytochrome P450 monooxygenases (PC-21, PC-05, PC-23, PC-20) and a FAD-dependent monooxygenase (PC-14) are required for the transformation of PC-M4 to penitrems A and E. Synthesis of these final products is proposed to proceed via penitrems D and C (PC-21, PC-05, PC-14) and penitrems B and F (PC-21, PC-05, PC-14, PC-23). This Penicillium crustosum (Blue mold fungus) protein is Cytochrome P450 monooxygenase penP.